A 520-amino-acid polypeptide reads, in one-letter code: Cytosol aminopeptidase (520 aa).

Zn(2+)-binding residues include K286 and D291. The active site involves K298. Residues D309, D368, and E370 each coordinate Zn(2+). R372 is an active-site residue.

This sequence belongs to the peptidase M17 family. As to quaternary structure, homohexamer. It depends on Zn(2+) as a cofactor.

It is found in the cytoplasm. It carries out the reaction Release of an N-terminal amino acid, Xaa-|-Yaa-, in which Xaa is preferably Leu, but may be other amino acids including Pro although not Arg or Lys, and Yaa may be Pro. Amino acid amides and methyl esters are also readily hydrolyzed, but rates on arylamides are exceedingly low.. It catalyses the reaction Release of N-terminal proline from a peptide.. Presumably involved in the processing and regular turnover of intracellular proteins. Catalyzes the removal of unsubstituted N-terminal amino acids from various peptides. The chain is Cytosol aminopeptidase (lap) from Dictyostelium discoideum (Social amoeba).